The sequence spans 160 residues: MKKIILTLSLGLLTACSAQIQKAEQNDMKLAPPTDVRSGYIRLVKNVNYYIDSESIWVDNQEPQIVHFDAVVNLDKGLYVYPEPKRYARSVRQYKILNCANYHLTQVRTDFYDEFWGQGLRAAPKKQKKHTLSLTPDTTLYNAAQIICANYGKAFSVDKK.

The N-terminal stretch at 1–15 (MKKIILTLSLGLLTA) is a signal peptide. C16 carries the N-palmitoyl cysteine lipid modification. Residue C16 is the site of S-diacylglycerol cysteine attachment. Positions 41-68 (IRLVKNVNYYIDSESIWVDNQEPQIVHF) are interaction with laminin and plasminogen. The interval 84–108 (PKRYARSVRQYKILNCANYHLTQVR) is interaction with vitronectin and epithelial cells.

Homodimer. Interacts with host vitronectin, laminin and plasminogen. Can interact with both immobilized and soluble vitronectin.

The protein localises to the cell outer membrane. It localises to the cell surface. Its function is as follows. Acts as a multifunctional adhesin involved in direct interactions with host epithelial cells and host proteins, including vitronectin, laminin and plasminogen. In addition, interaction with serum vitronectin plays an important role in bacterial serum resistance, and conversion of plasminogen to plasmin at the cell surface aids in immune evasion and contributes to bacterial virulence. Induces a pro-inflammatory epithelial cell response, leading to interleukin-8 (IL-8) secretion and up-regulation of ICAM1. The sequence is that of Surface-adhesin protein E (pe) from Haemophilus influenzae (strain NTHi 3655).